We begin with the raw amino-acid sequence, 253 residues long: U2 small nuclear ribonucleoprotein A' (253 aa).

LRR repeat units lie at residues 19 to 40 (KDRE…GIAK), 41 to 62 (DQDA…PFFP), 63 to 84 (RLHT…IAST), and 87 to 108 (NLTT…DPLR). The 39-residue stretch at 121–159 (NPVTRKEHYRYWVIWRIPSVRFLDYQKVKDAERAKAKEL) folds into the LRRCT domain. Residues 228–253 (ELNEGRIPGGALDAGEDSEDENQMQT) form a disordered region. Residues 241–253 (AGEDSEDENQMQT) show a composition bias toward acidic residues.

This sequence belongs to the U2 small nuclear ribonucleoprotein A family. Associated with the spliceosome.

It is found in the nucleus. Its function is as follows. Involved in pre-mRNA splicing. This is U2 small nuclear ribonucleoprotein A' (lea1) from Aspergillus fumigatus (strain ATCC MYA-4609 / CBS 101355 / FGSC A1100 / Af293) (Neosartorya fumigata).